A 600-amino-acid polypeptide reads, in one-letter code: UPF0588 membrane protein C20F10.02c (600 aa).

2 helical membrane passes run 409–429 (LSAT…TSLV) and 437–457 (YHWL…SVLI).

It belongs to the UPF0588 family.

It is found in the membrane. The sequence is that of UPF0588 membrane protein C20F10.02c from Schizosaccharomyces pombe (strain 972 / ATCC 24843) (Fission yeast).